Consider the following 177-residue polypeptide: FMRFamide-like neuropeptides 7 (177 aa).

A signal peptide spans 1-19; the sequence is MLGSRFLLLALGLLVLVLA. A propeptide spanning residues 20–49 is cleaved from the precursor; it reads EESAEQQVQEPTELEKSGEQLSEEDLIDEQ. A disordered region spans residues 25–106; sequence QQVQEPTELE…RSSMVRFGKR (82 aa). Phenylalanine amide occurs at positions 62, 75, 89, 103, 117, and 130. L143 carries the post-translational modification Leucine amide. Position 157 is a phenylalanine amide (F157). The propeptide occupies 161-177; sequence SMEFEMQSNEKNIEDSE.

The protein belongs to the FARP (FMRFamide related peptide) family. Expressed in the ASI sensory neurons, the ALA interneuron and the AVG interneuron from where secretion occurs. Expression in the ASI neurons is necessary and sufficient to maintain serotonin-induced fat loss.

Its subcellular location is the secreted. Functionally, FMRFamide-like neuropeptides. Stimulates serotonin-induced fat loss by binding to and activating the npr-22 receptor which leads to induction of the atgl-1 lipase and subsequent fat loss. Together with atfs-1, negatively regulates the expression of the transcription regulator hlh-11, to promote expression of atgl-1, and thus atgl-1-dependent fat oxidation in response to mitochondrial stress. TPMQRSSMVRF-amide: Acts as a ligand for the npr-22 receptor in vitro. Its function is as follows. SPMQRSSMVRF-amide: Acts as a ligand for the npr-22 receptor in vitro. In terms of biological role, acts as a ligand for the npr-22 receptor in vitro. The chain is FMRFamide-like neuropeptides 7 from Caenorhabditis elegans.